Reading from the N-terminus, the 151-residue chain is Large ribosomal subunit protein uL13 (151 aa).

It belongs to the universal ribosomal protein uL13 family. As to quaternary structure, part of the 50S ribosomal subunit.

This protein is one of the early assembly proteins of the 50S ribosomal subunit, although it is not seen to bind rRNA by itself. It is important during the early stages of 50S assembly. The sequence is that of Large ribosomal subunit protein uL13 from Microchaete diplosiphon (Fremyella diplosiphon).